Here is a 225-residue protein sequence, read N- to C-terminus: Single-pass membrane and coiled-coil domain-containing protein 3 (225 aa).

The stretch at 62-92 (IKENCDLIIQAIMKIQKELQKVDEALKDKLE) forms a coiled coil. A helical membrane pass occupies residues 155–175 (IGASLLGSIGVAVLGLGIDMI). Residues 183–207 (VEKTQLQAAIKSYEKHLVEFKSASE) are a coiled coil.

It is found in the membrane. This chain is Single-pass membrane and coiled-coil domain-containing protein 3 (SMCO3), found in Homo sapiens (Human).